A 439-amino-acid chain; its full sequence is ATP-dependent protease ATPase subunit HslU (439 aa).

ATP contacts are provided by residues Ile17, 59–64, Asp251, Glu317, and Arg389; that span reads GVGKTE.

This sequence belongs to the ClpX chaperone family. HslU subfamily. In terms of assembly, a double ring-shaped homohexamer of HslV is capped on each side by a ring-shaped HslU homohexamer. The assembly of the HslU/HslV complex is dependent on binding of ATP.

Its subcellular location is the cytoplasm. In terms of biological role, ATPase subunit of a proteasome-like degradation complex; this subunit has chaperone activity. The binding of ATP and its subsequent hydrolysis by HslU are essential for unfolding of protein substrates subsequently hydrolyzed by HslV. HslU recognizes the N-terminal part of its protein substrates and unfolds these before they are guided to HslV for hydrolysis. The protein is ATP-dependent protease ATPase subunit HslU of Campylobacter jejuni subsp. jejuni serotype O:6 (strain 81116 / NCTC 11828).